The following is a 160-amino-acid chain: Lipoprotein signal peptidase (160 aa).

Helical transmembrane passes span 7–27 (WFWLVAIIGLGLDQLTKYITV), 39–59 (LWPGVFHLTYVINTGAAFSFF), 62–82 (GAVWLRWLSLAVSLGLIFLGW), and 96–116 (GFILAGALGNGIDRFLFGYVV). Active-site residues include Asp-117 and Asp-133. Residues 126–146 (FPVFNLADTFINIGIFFLLLA) form a helical membrane-spanning segment.

Belongs to the peptidase A8 family.

The protein localises to the cell inner membrane. The catalysed reaction is Release of signal peptides from bacterial membrane prolipoproteins. Hydrolyzes -Xaa-Yaa-Zaa-|-(S,diacylglyceryl)Cys-, in which Xaa is hydrophobic (preferably Leu), and Yaa (Ala or Ser) and Zaa (Gly or Ala) have small, neutral side chains.. It functions in the pathway protein modification; lipoprotein biosynthesis (signal peptide cleavage). Its function is as follows. This protein specifically catalyzes the removal of signal peptides from prolipoproteins. The chain is Lipoprotein signal peptidase from Gloeothece citriformis (strain PCC 7424) (Cyanothece sp. (strain PCC 7424)).